The chain runs to 73 residues: Translation initiation factor IF-1 (73 aa).

Residues 1 to 73 form the S1-like domain; it reads MAKKDGVIEL…ARGRIVYRYK (73 aa).

This sequence belongs to the IF-1 family. In terms of assembly, component of the 30S ribosomal translation pre-initiation complex which assembles on the 30S ribosome in the order IF-2 and IF-3, IF-1 and N-formylmethionyl-tRNA(fMet); mRNA recruitment can occur at any time during PIC assembly.

It localises to the cytoplasm. Its function is as follows. One of the essential components for the initiation of protein synthesis. Stabilizes the binding of IF-2 and IF-3 on the 30S subunit to which N-formylmethionyl-tRNA(fMet) subsequently binds. Helps modulate mRNA selection, yielding the 30S pre-initiation complex (PIC). Upon addition of the 50S ribosomal subunit IF-1, IF-2 and IF-3 are released leaving the mature 70S translation initiation complex. The polypeptide is Translation initiation factor IF-1 (Tropheryma whipplei (strain TW08/27) (Whipple's bacillus)).